We begin with the raw amino-acid sequence, 238 residues long: Ion-translocating oxidoreductase complex subunit E (238 aa).

A run of 5 helical transmembrane segments spans residues 41-61 (LGLGLATMLVLACSNAAVSLV), 71-91 (LPAFVMIIAALTTCIELLMQA), 95-115 (ELYQVLGIFIPLITTNCVILG), 130-150 (SFDGLLMGLGFALVLLVLGGL), and 184-204 (GFLLAILPPGAFIMLGLLIAL).

This sequence belongs to the NqrDE/RnfAE family. As to quaternary structure, the complex is composed of six subunits: RnfA, RnfB, RnfC, RnfD, RnfE and RnfG.

The protein localises to the cell inner membrane. In terms of biological role, part of a membrane-bound complex that couples electron transfer with translocation of ions across the membrane. This Pseudomonas aeruginosa (strain UCBPP-PA14) protein is Ion-translocating oxidoreductase complex subunit E.